An 82-amino-acid polypeptide reads, in one-letter code: Delta-ctenitoxin-Pn2a (82 aa).

The N-terminal stretch at 1 to 17 is a signal peptide; that stretch reads MKVAILFLSILVLAVAS. A propeptide spanning residues 18 to 34 is cleaved from the precursor; that stretch reads ESIEESRDDFAVEELGR. Disulfide bonds link C37–C51, C44–C57, C48–C80, C50–C65, and C59–C63.

The protein belongs to the neurotoxin 03 (Tx2) family. 06 subfamily. In terms of tissue distribution, expressed by the venom gland.

The protein resides in the secreted. Toxin that is known to potentiate erectile function. It binds voltage-dependently to sodium channels (Nav), inhibits the inactivation of the activated channels and decreases the peak inward current. The toxin delays inactivation of Nav1.2/SCN2A, Nav1.3/SCN3A, Nav1.4/SCN4A and Nav1.8/SCN10A, slows the inactivation process and decreases the sodium peak amplitude of Nav1.5/SCN5A and Nav1.6/SCN8A. In vivo, it enhances erectile function by inducing the release of nictric oxide (NO): it slows the sodium current, leading to depolarization, which leads to an increase in calcium influx (probably via activation of N-type calcium channels) which in turn activates neuronal NO synthase (nNOS/NOS1), inducing nitric oxide (NO) production. In a final step, NO activates soluble guanylate cyclase (GUCY1A1/GUCY1B1) which in turn increases cGMP formation, resulting in penile erection. It is noteworthy that the toxin does not provoke erection by inhibiting phosphodiesterase type 5 (PDE5A), an enzyme that hydrolysis cGMP. In vivo, it also causes scratching, lacrimation, hypersalivation, sweating and agitation followed by spastic paralysis of the anterior and posterior extremities and death at dose levels of 0.79 mg/mouse. It is insecticidal to the larval and adult forms of the house fly. The toxin also improves cavernosal relaxation in different models where erectile dysfunction is observed, such as deoxycorticosterone-acetate (DOCA)-salt hypertensive rats, mice models for type-1 diabetes, as well as elderly rats. The chain is Delta-ctenitoxin-Pn2a from Phoneutria nigriventer (Brazilian armed spider).